Consider the following 483-residue polypeptide: Chromosomal replication initiator protein DnaA (483 aa).

The interval 1–71 is domain I, interacts with DnaA modulators; the sequence is MKEFWQTCVS…EALAAEWYQR (71 aa). The tract at residues 71-145 is domain II; it reads RPVQVQFELP…DAANIVYERS (75 aa). Positions 146–362 are domain III, AAA+ region; sequence RLNTDLTFEN…GALRKVLAYA (217 aa). Positions 190, 192, 193, and 194 each coordinate ATP. The segment at 363–483 is domain IV, binds dsDNA; the sequence is RFHGREALNV…LHVLEQTLKG (121 aa).

This sequence belongs to the DnaA family. Oligomerizes as a right-handed, spiral filament on DNA at oriC.

The protein resides in the cytoplasm. Functionally, plays an essential role in the initiation and regulation of chromosomal replication. ATP-DnaA binds to the origin of replication (oriC) to initiate formation of the DNA replication initiation complex once per cell cycle. Binds the DnaA box (a 9 base pair repeat at the origin) and separates the double-stranded (ds)DNA. Forms a right-handed helical filament on oriC DNA; dsDNA binds to the exterior of the filament while single-stranded (ss)DNA is stabiized in the filament's interior. The ATP-DnaA-oriC complex binds and stabilizes one strand of the AT-rich DNA unwinding element (DUE), permitting loading of DNA polymerase. After initiation quickly degrades to an ADP-DnaA complex that is not apt for DNA replication. Binds acidic phospholipids. This is Chromosomal replication initiator protein DnaA from Bordetella avium (strain 197N).